The following is a 168-amino-acid chain: Mitochondrial inner membrane protein Mpv17 (168 aa).

A run of 4 helical transmembrane segments spans residues 12–29 (INVA…QFFF), 41–61 (RTLR…RRWY), 82–101 (MLVD…SFLV), and 144–166 (LGYQ…SMIL).

The protein belongs to the peroxisomal membrane protein PXMP2/4 family. In terms of assembly, part of a larger complex that may be a homohexamer.

It localises to the mitochondrion inner membrane. Its function is as follows. Non-selective channel that modulates the membrane potential under normal conditions and oxidative stress, and is involved in mitochondrial homeostasis. Can translocate uridine, but not orotate, across a lipid membrane. Involved in maintenance of mitochondrial ultrastructure. May be involved in mitochondrial DNA (mtDNA) maintenance but does not appear to be directly involved in mitochondrial deoxynucleoside triphosphate (dNTP) pool homeostasis. May be involved in the regulation of reactive oxygen species metabolism and the control of oxidative phosphorylation. The sequence is that of Mitochondrial inner membrane protein Mpv17 from Drosophila melanogaster (Fruit fly).